The primary structure comprises 709 residues: Nicastrin (709 aa).

Positions 1-33 are cleaved as a signal peptide; the sequence is MATAGGGSGADPGSRGLLRLLSFCVLLAGLCRG. Over 34–669 the chain is Extracellular; that stretch reads NSVERKIYIP…IFLIASKELE (636 aa). Residues N45 and N55 are each glycosylated (N-linked (GlcNAc...) asparagine). Cystine bridges form between C50/C62 and C140/C159. N-linked (GlcNAc...) asparagine glycosylation is found at N187, N200, and N204. 2 cysteine pairs are disulfide-bonded: C195–C213 and C230–C248. N-linked (GlcNAc...) asparagine glycosylation is found at N264, N387, N417, N435, N464, N506, N530, N562, N573, N580, and N612. A disulfide bridge links C586 with C620. Residues 670–690 traverse the membrane as a helical segment; it reads LITLTVGFGILIFSLIVTYCI. Topologically, residues 691–709 are cytoplasmic; the sequence is NAKADVLFIAPREPGAVSY.

This sequence belongs to the nicastrin family. Component of the gamma-secretase complex. The functional gamma-secretase complex is composed of at least four polypeptides: a presenilin homodimer (PSEN1 or PSEN2), nicastrin (NCSTN), APH1 (APH1A or APH1B) and PSENEN/PEN2. Binds to proteolytic processed C-terminal fragments C83 and C99 of the amyloid precursor protein (APP). Interacts with PSEN1 and PSEN2. Post-translationally, N-glycosylated. Detected in brain (at protein level). Widely expressed.

It localises to the membrane. The protein localises to the cytoplasmic vesicle membrane. The protein resides in the melanosome. In terms of biological role, essential subunit of the gamma-secretase complex, an endoprotease complex that catalyzes the intramembrane cleavage of integral membrane proteins such as Notch receptors and APP (amyloid-beta precursor protein). The gamma-secretase complex plays a role in Notch and Wnt signaling cascades and regulation of downstream processes via its role in processing key regulatory proteins, and by regulating cytosolic CTNNB1 levels. The polypeptide is Nicastrin (NCSTN) (Homo sapiens (Human)).